The chain runs to 379 residues: Cytochrome b (379 aa).

4 helical membrane passes run 33-53, 77-98, 113-133, and 178-198; these read FGSL…FLAM, WLIR…FIHV, WNIG…GYVL, and FFAF…VHLL. The heme b site is built by histidine 83 and histidine 97. Residues histidine 182 and histidine 196 each coordinate heme b. Histidine 201 provides a ligand contact to a ubiquinone. The next 4 membrane-spanning stretches (helical) occupy residues 226–246, 288–308, 320–340, and 347–367; these read TKDL…ALFF, LGGV…PLLN, VTQV…WIGG, and FTTI…ILIP.

Belongs to the cytochrome b family. The cytochrome bc1 complex contains 11 subunits: 3 respiratory subunits (MT-CYB, CYC1 and UQCRFS1), 2 core proteins (UQCRC1 and UQCRC2) and 6 low-molecular weight proteins (UQCRH/QCR6, UQCRB/QCR7, UQCRQ/QCR8, UQCR10/QCR9, UQCR11/QCR10 and a cleavage product of UQCRFS1). This cytochrome bc1 complex then forms a dimer. Heme b serves as cofactor.

It is found in the mitochondrion inner membrane. Its function is as follows. Component of the ubiquinol-cytochrome c reductase complex (complex III or cytochrome b-c1 complex) that is part of the mitochondrial respiratory chain. The b-c1 complex mediates electron transfer from ubiquinol to cytochrome c. Contributes to the generation of a proton gradient across the mitochondrial membrane that is then used for ATP synthesis. This is Cytochrome b (MT-CYB) from Akodon montensis (Montane grass mouse).